A 181-amino-acid chain; its full sequence is UPF0228 protein MA_3117 (181 aa).

Belongs to the UPF0228 family.

This Methanosarcina acetivorans (strain ATCC 35395 / DSM 2834 / JCM 12185 / C2A) protein is UPF0228 protein MA_3117.